We begin with the raw amino-acid sequence, 545 residues long: Lysine--tRNA ligase (545 aa).

Residues 41–49 carry the 'HIGH' region motif; that stretch reads PSGVPHLGH. Positions 306–310 match the 'KMSKS' region motif; it reads ALSSS.

This sequence belongs to the class-I aminoacyl-tRNA synthetase family.

It localises to the cytoplasm. The enzyme catalyses tRNA(Lys) + L-lysine + ATP = L-lysyl-tRNA(Lys) + AMP + diphosphate. The sequence is that of Lysine--tRNA ligase from Natronomonas pharaonis (strain ATCC 35678 / DSM 2160 / CIP 103997 / JCM 8858 / NBRC 14720 / NCIMB 2260 / Gabara) (Halobacterium pharaonis).